Consider the following 1108-residue polypeptide: Retinal guanylyl cyclase 1 (1108 aa).

Positions 1-54 (MSAWLLPAGGFPGAGFCIPAWQSRSSLSRVLRWPGPGLPGLLLLLLLPSPSAFS) are cleaved as a signal peptide. Residues 55 to 465 (AVFKVGVLGP…PDVICNGGVE (411 aa)) are Extracellular-facing. Cys-108 and Cys-136 are oxidised to a cystine. Asn-300 carries an N-linked (GlcNAc...) asparagine glycan. Residues 466–490 (PGLVFVGFLLVIVVGLTGAFLAHYL) form a helical membrane-spanning segment. Residues 491-1108 (RHRLLHMQMV…KARPGQFTGK (618 aa)) are Cytoplasmic-facing. The tract at residues 520–552 (GGSSRKVAQGSRSSLATRSTSDIRSVPSQPQES) is disordered. Residues 520–811 (GGSSRKVAQG…DLTFDLFKGI (292 aa)) form the Protein kinase domain. The span at 529–552 (GSRSSLATRSTSDIRSVPSQPQES) shows a compositional bias: polar residues. A Guanylate cyclase domain is found at 883–1013 (TLYFSDIVGF…DTVNTASRME (131 aa)). A disordered region spans residues 1069–1108 (IPKPPDLQPGASNHGISLQEIPPERRKKLEKARPGQFTGK).

Belongs to the adenylyl cyclase class-4/guanylyl cyclase family. In terms of assembly, homodimer; requires homodimerization for guanylyl cyclase activity. Interacts (via C-terminus) with RD3 (via C-terminus); promotes the exit of GUCY2E from the endoplasmic reticulum and its trafficking to the photoreceptor outer segments. Interaction with RD3 negatively regulates GUCY2E guanylate cyclase activity. Post-translationally, there are 9 conserved cysteine residues in sensory guanylate cyclases, 6 in the extracellular domain, which may be involved in intra- or interchain disulfide bonds. As to expression, expressed in retina and enriched in photoreceptor outer segments.

It is found in the membrane. Its subcellular location is the photoreceptor outer segment membrane. It localises to the endoplasmic reticulum membrane. The catalysed reaction is GTP = 3',5'-cyclic GMP + diphosphate. Its activity is regulated as follows. Activated by GUCA1A when free calcium ions concentration is low, and inhibited by GUCA1A when free calcium ions concentration is high. Negatively regulated by RD3; inhibits the basal and GUCA1A-stimulated guanylate cyclase activity. Its function is as follows. Catalyzes the synthesis of cyclic GMP (cGMP) in rods and cones of photoreceptors. Plays an essential role in phototransduction, by mediating cGMP replenishment. May also participate in the trafficking of membrane-asociated proteins to the photoreceptor outer segment membrane. This chain is Retinal guanylyl cyclase 1 (Gucy2e), found in Rattus norvegicus (Rat).